The chain runs to 404 residues: Cysteine desulfurase IscS (404 aa).

Residues 75–76 (AT), Asn-155, Gln-183, and 203–205 (SAH) each bind pyridoxal 5'-phosphate. Lys-206 carries the post-translational modification N6-(pyridoxal phosphate)lysine. Thr-243 contacts pyridoxal 5'-phosphate. The active-site Cysteine persulfide intermediate is the Cys-328. [2Fe-2S] cluster is bound at residue Cys-328.

Belongs to the class-V pyridoxal-phosphate-dependent aminotransferase family. NifS/IscS subfamily. Homodimer. Forms a heterotetramer with IscU, interacts with other sulfur acceptors. Pyridoxal 5'-phosphate serves as cofactor.

Its subcellular location is the cytoplasm. It catalyses the reaction (sulfur carrier)-H + L-cysteine = (sulfur carrier)-SH + L-alanine. The protein operates within cofactor biosynthesis; iron-sulfur cluster biosynthesis. In terms of biological role, master enzyme that delivers sulfur to a number of partners involved in Fe-S cluster assembly, tRNA modification or cofactor biosynthesis. Catalyzes the removal of elemental sulfur atoms from cysteine to produce alanine. Functions as a sulfur delivery protein for Fe-S cluster synthesis onto IscU, an Fe-S scaffold assembly protein, as well as other S acceptor proteins. This chain is Cysteine desulfurase IscS, found in Pseudomonas entomophila (strain L48).